Here is a 749-residue protein sequence, read N- to C-terminus: cGMP-dependent protein kinase egl-4 (749 aa).

The stretch at 30–96 (EAHELQKLIP…LEQKAQSAAS (67 aa)) forms a coiled coil. The interval 87–111 (LEQKAQSAASPGQPPSPSPRTDQLG) is disordered. Residues 234–237 (GELA), 244–245 (RT), arginine 349, 358–361 (GERA), 368–369 (RT), and tyrosine 403 each bind 3',5'-cyclic GMP. Residues 438–698 (VKRLATLGVG…VNDIRKHRWF (261 aa)) enclose the Protein kinase domain. Residues 444 to 452 (LGVGGFGRV) and lysine 468 contribute to the ATP site. The Nuclear localization signal motif lies at 461–473 (KSKTYALKALKKK). Aspartate 562 functions as the Proton acceptor in the catalytic mechanism. Residues 699–749 (MGFDWEGLRTKTLKPPILPKVNNPADVTNFDNYPPDNDVPPDEFSGWDEGF) form the AGC-kinase C-terminal domain. A disordered region spans residues 723–749 (ADVTNFDNYPPDNDVPPDEFSGWDEGF).

This sequence belongs to the protein kinase superfamily. AGC Ser/Thr protein kinase family. cGMP subfamily. Mg(2+) serves as cofactor. Autophosphorylated.

The protein resides in the cytoplasm. It localises to the nucleus. It carries out the reaction L-seryl-[protein] + ATP = O-phospho-L-seryl-[protein] + ADP + H(+). It catalyses the reaction L-threonyl-[protein] + ATP = O-phospho-L-threonyl-[protein] + ADP + H(+). With respect to regulation, binding of cGMP results in enzyme activation. In terms of biological role, promotes chemoreceptor gene expression in response to increased cGMP levels by antagonizing the gene repression functions of the class II HDAC hda-4 and the mef-2 transcription factor. Regulates gene expression via recruitment of a histone deacetylase complex containing hda-2, saeg-1 and saeg-2. Represses body size and lifespan through the dbl-1 and insulin pathways, respectively. May also signal through daf-3 and/or daf-5. Role in egg-laying, dauer formation and motility. Regulates behavioral responses to various chemosensory stimuli in sensory neurons. Required for the initiation of long term adaptation to prolonged odor exposure which results in a decrease in odor seeking behavior. May regulate this process by phosphorylating tax-2, a subunit of cyclic nucleotide-gated channel tax-2/tax-4. In ASH sensory neurons, negatively regulates avoidance behavior to some bitter tastants, such as quinine, probably by phosphorylating rgs-2 and rgs-3 which are 2 regulator of G-protein signaling proteins. In AWB sensory neurons, involved in avoidance behavior to some repellent odors. In ASE left (ASEL) sensory neuron, involved in the sensing of environmental alkalinity downstream of receptor-type guanylate cyclase gcy-14. In sensory neurons, involved in the signaling pathway downstream of insulin, TGF-beta and receptor-type guanylate cyclase responsible for inducing quiescence after food intake. Might play a role in aversive olfactory learning in AWC neurons when an odor is associated with food deprivation, depending on the ins-1/age-1 signal from the AIA to the AWC neurons. Probably by regulating neuronal transmission downstream of lin-3 and receptor lin-23 and phospholipase plc-3 in ALA neurons, involved in the decrease in locomotion during the quiescent state that precedes each larval molt. The protein is cGMP-dependent protein kinase egl-4 of Caenorhabditis briggsae.